A 68-amino-acid chain; its full sequence is UPF0435 protein SAB1812c (68 aa).

The protein belongs to the UPF0435 family.

This is UPF0435 protein SAB1812c from Staphylococcus aureus (strain bovine RF122 / ET3-1).